Here is a 207-residue protein sequence, read N- to C-terminus: Dephospho-CoA kinase (207 aa).

A DPCK domain is found at Ile-10 to Ser-207. Gly-18–Ala-23 contacts ATP.

Belongs to the CoaE family.

The protein localises to the cytoplasm. The catalysed reaction is 3'-dephospho-CoA + ATP = ADP + CoA + H(+). The protein operates within cofactor biosynthesis; coenzyme A biosynthesis; CoA from (R)-pantothenate: step 5/5. Its function is as follows. Catalyzes the phosphorylation of the 3'-hydroxyl group of dephosphocoenzyme A to form coenzyme A. The polypeptide is Dephospho-CoA kinase (Pseudomonas fluorescens (strain Pf0-1)).